A 77-amino-acid polypeptide reads, in one-letter code: PTS system N-acetylglucosamine-specific EIIB component (77 aa).

The 76-residue stretch at 2-77 (ASKAEKIVAG…PIAAEIEDMM (76 aa)) folds into the PTS EIIB type-1 domain. Cys-24 acts as the Phosphocysteine intermediate; for EIIB activity in catalysis.

The enzyme catalyses N(pros)-phospho-L-histidyl-[protein] + N-acetyl-D-glucosamine(out) = N-acetyl-D-glucosamine 6-phosphate(in) + L-histidyl-[protein]. The phosphoenolpyruvate-dependent sugar phosphotransferase system (sugar PTS), a major carbohydrate active transport system, catalyzes the phosphorylation of incoming sugar substrates concomitantly with their translocation across the cell membrane. This system is involved in N-acetylglucosamine (GlcNAc) transport. This is PTS system N-acetylglucosamine-specific EIIB component from Streptomyces coelicolor (strain ATCC BAA-471 / A3(2) / M145).